A 48-amino-acid chain; its full sequence is Large ribosomal subunit protein bL33A (48 aa).

The protein belongs to the bacterial ribosomal protein bL33 family.

This is Large ribosomal subunit protein bL33A from Shouchella clausii (strain KSM-K16) (Alkalihalobacillus clausii).